The sequence spans 175 residues: NADH-ubiquinone oxidoreductase chain 6 (175 aa).

5 helical membrane passes run 1 to 21 (MMTY…VGFS), 27 to 47 (VYGG…IMNF), 49 to 69 (GSFL…VVFG), 88 to 108 (VVFG…LYVL), and 149 to 169 (YGMW…VVVM).

The protein belongs to the complex I subunit 6 family. Core subunit of respiratory chain NADH dehydrogenase (Complex I) which is composed of 45 different subunits.

The protein localises to the mitochondrion inner membrane. The enzyme catalyses a ubiquinone + NADH + 5 H(+)(in) = a ubiquinol + NAD(+) + 4 H(+)(out). In terms of biological role, core subunit of the mitochondrial membrane respiratory chain NADH dehydrogenase (Complex I) which catalyzes electron transfer from NADH through the respiratory chain, using ubiquinone as an electron acceptor. Essential for the catalytic activity and assembly of complex I. This Pteropus scapulatus (Little red flying fox) protein is NADH-ubiquinone oxidoreductase chain 6 (MT-ND6).